A 392-amino-acid chain; its full sequence is NAD(P)H-quinone oxidoreductase subunit H (392 aa).

The protein belongs to the complex I 49 kDa subunit family. In terms of assembly, NDH-1 can be composed of about 15 different subunits; different subcomplexes with different compositions have been identified which probably have different functions.

The protein resides in the cellular thylakoid membrane. The catalysed reaction is a plastoquinone + NADH + (n+1) H(+)(in) = a plastoquinol + NAD(+) + n H(+)(out). It catalyses the reaction a plastoquinone + NADPH + (n+1) H(+)(in) = a plastoquinol + NADP(+) + n H(+)(out). Functionally, NDH-1 shuttles electrons from an unknown electron donor, via FMN and iron-sulfur (Fe-S) centers, to quinones in the respiratory and/or the photosynthetic chain. The immediate electron acceptor for the enzyme in this species is believed to be plastoquinone. Couples the redox reaction to proton translocation, and thus conserves the redox energy in a proton gradient. Cyanobacterial NDH-1 also plays a role in inorganic carbon-concentration. In Synechococcus sp. (strain JA-2-3B'a(2-13)) (Cyanobacteria bacterium Yellowstone B-Prime), this protein is NAD(P)H-quinone oxidoreductase subunit H.